Consider the following 387-residue polypeptide: Phosphoglycerate kinase (387 aa).

Substrate contacts are provided by residues 21–23 (DLN), Arg-36, 59–62 (HLGR), Arg-113, and Arg-146. ATP-binding positions include Lys-197, Glu-314, and 340–343 (GGDT).

It belongs to the phosphoglycerate kinase family. As to quaternary structure, monomer.

It localises to the cytoplasm. It catalyses the reaction (2R)-3-phosphoglycerate + ATP = (2R)-3-phospho-glyceroyl phosphate + ADP. It participates in carbohydrate degradation; glycolysis; pyruvate from D-glyceraldehyde 3-phosphate: step 2/5. This chain is Phosphoglycerate kinase, found in Aeromonas hydrophila subsp. hydrophila (strain ATCC 7966 / DSM 30187 / BCRC 13018 / CCUG 14551 / JCM 1027 / KCTC 2358 / NCIMB 9240 / NCTC 8049).